A 196-amino-acid chain; its full sequence is Small ribosomal subunit protein uS4c (196 aa).

The segment at 15–41 is disordered; it reads LGALPGLTSKRPRSGSDLKNPLRSGKR. The region spanning 89 to 150 is the S4 RNA-binding domain; sequence MRLDNILFRL…KQRSKALIQN (62 aa).

Belongs to the universal ribosomal protein uS4 family. As to quaternary structure, part of the 30S ribosomal subunit. Contacts protein S5. The interaction surface between S4 and S5 is involved in control of translational fidelity.

The protein localises to the plastid. Its subcellular location is the chloroplast. One of the primary rRNA binding proteins, it binds directly to 16S rRNA where it nucleates assembly of the body of the 30S subunit. Its function is as follows. With S5 and S12 plays an important role in translational accuracy. This Narcissus odorus (Campernelle jonquil) protein is Small ribosomal subunit protein uS4c (rps4).